Reading from the N-terminus, the 302-residue chain is Putative peptide permease protein BOV_A0350 (302 aa).

A disordered region spans residues 1 to 22; it reads MRSSIHASRLRKMGQSIPASTG. The next 6 membrane-spanning stretches (helical) occupy residues 38 to 58, 101 to 121, 147 to 167, 200 to 222, 230 to 250, and 268 to 288; these read IFGL…PLWL, LLVA…IGAI, IFLL…VVVI, AGLG…VVYA, ILLE…AASW, and WQWL…NFIG. In terms of domain architecture, ABC transmembrane type-1 spans 97-288; that stretch reads GRISLLVAVS…LAVLAINFIG (192 aa).

This sequence belongs to the binding-protein-dependent transport system permease family. As to quaternary structure, the complex is composed of two ATP-binding proteins (BOV_A0347 and BOV_A0348), two transmembrane proteins (BOV_A0350 and BOV_A0351) and a solute-binding protein (BOV_A0352).

Its subcellular location is the cell inner membrane. In terms of biological role, probably part of an ABC transporter complex that could be involved in peptide import. Probably responsible for the translocation of the substrate across the membrane. The chain is Putative peptide permease protein BOV_A0350 from Brucella ovis (strain ATCC 25840 / 63/290 / NCTC 10512).